Consider the following 1682-residue polypeptide: 1-phosphatidylinositol 4,5-bisphosphate phosphodiesterase eta-1 (1682 aa).

The PH domain maps to 20 to 128 (SVMQSGTQMI…WITGLKYLMA (109 aa)). 3 EF-hand domains span residues 142-177 (THDQ…LNVN), 178-214 (LPRR…MSLR), and 226-246 (DKKD…EQKM). Ca(2+) is bound by residues aspartate 155, asparagine 157, aspartate 159, and glutamate 166. The 146-residue stretch at 299–444 (QDMDQPLCNY…LKGKILVKGK (146 aa)) folds into the PI-PLC X-box domain. Histidine 314 is an active-site residue. The Ca(2+) site is built by asparagine 315, glutamate 344, and aspartate 346. Histidine 358 is an active-site residue. Glutamate 393 serves as a coordination point for Ca(2+). Positions 442 and 444 each coordinate substrate. The disordered stretch occupies residues 534 to 588 (LDVKESGKKSHGRSLMANFGKHKQKATKSRSKSYSTDDEDDSLQNPGKEGGQLYR). Residues 553–564 (GKHKQKATKSRS) show a composition bias toward basic residues. The PI-PLC Y-box domain maps to 602 to 715 (LSDLVVYTNS…GYILKPQQMC (114 aa)). The substrate site is built by serine 628 and arginine 655. Positions 716–844 (KGTFNPFSGD…PGYRHVYLEG (129 aa)) constitute a C2 domain. Isoleucine 759, aspartate 761, aspartate 785, aspartate 814, histidine 815, and aspartate 816 together coordinate Ca(2+). Residues 992–1018 (DTDGKENCLAGDKDDRRKGAATRKDPH) show a composition bias toward basic and acidic residues. Disordered regions lie at residues 992-1083 (DTDG…LSPR), 1296-1321 (NLPG…HSQV), and 1581-1603 (RAKE…GGVV). A compositionally biased stretch (low complexity) spans 1019 to 1033 (FSNFNKKLSSSSSAL). Polar residues-rich tracts occupy residues 1040–1050 (QGPTASVSNPE) and 1065–1074 (NMTNDCQENH). Residues 1581–1590 (RAKEKQEAGK) are compositionally biased toward basic and acidic residues.

Ca(2+) serves as cofactor. Expressed in brain and to a lower extent in lung. In brain, it is found in cerebrum, cerebellum and spinal cord.

The protein resides in the cytoplasm. It localises to the membrane. The enzyme catalyses a 1,2-diacyl-sn-glycero-3-phospho-(1D-myo-inositol-4,5-bisphosphate) + H2O = 1D-myo-inositol 1,4,5-trisphosphate + a 1,2-diacyl-sn-glycerol + H(+). Its function is as follows. The production of the second messenger molecules diacylglycerol (DAG) and inositol 1,4,5-trisphosphate (IP3) is mediated by calcium-activated phosphatidylinositol-specific phospholipase C enzymes. This is 1-phosphatidylinositol 4,5-bisphosphate phosphodiesterase eta-1 from Mus musculus (Mouse).